A 183-amino-acid chain; its full sequence is Ribosome maturation factor RimM (183 aa).

The PRC barrel domain occupies 104-183; it reads EGDYYWKDLM…TIEVDWDPGF (80 aa).

Belongs to the RimM family. Binds ribosomal protein uS19.

The protein resides in the cytoplasm. An accessory protein needed during the final step in the assembly of 30S ribosomal subunit, possibly for assembly of the head region. Essential for efficient processing of 16S rRNA. May be needed both before and after RbfA during the maturation of 16S rRNA. It has affinity for free ribosomal 30S subunits but not for 70S ribosomes. The sequence is that of Ribosome maturation factor RimM from Salmonella arizonae (strain ATCC BAA-731 / CDC346-86 / RSK2980).